The primary structure comprises 348 residues: Peptide-N(4)-(N-acetyl-beta-glucosaminyl)asparagine amidase (348 aa).

Residues Cys116, Cys119, Cys151, and Cys154 each coordinate Zn(2+). Cys177 serves as the catalytic Nucleophile. Active-site residues include His204 and Asp221. Position 224 (Glu224) interacts with substrate. The segment at 311-348 is disordered; it reads PSATPTKEMQKLKISKTGNKGRISGSAEWKESRGENGK. The span at 338 to 348 shows a compositional bias: basic and acidic residues; that stretch reads EWKESRGENGK.

Belongs to the transglutaminase-like superfamily. PNGase family. Zn(2+) serves as cofactor.

It is found in the cytoplasm. It catalyses the reaction Hydrolysis of an N(4)-(acetyl-beta-D-glucosaminyl)asparagine residue in which the glucosamine residue may be further glycosylated, to yield a (substituted) N-acetyl-beta-D-glucosaminylamine and a peptide containing an aspartate residue.. Its function is as follows. Specifically deglycosylates the denatured form of N-linked glycoproteins in the cytoplasm and assists their proteasome-mediated degradation. Cleaves the beta-aspartyl-glucosamine (GlcNAc) of the glycan and the amide side chain of Asn, converting Asn to Asp. Prefers proteins containing high-mannose over those bearing complex type oligosaccharides. Can recognize misfolded proteins in the endoplasmic reticulum that are exported to the cytosol to be destroyed and deglycosylate them, while it has no activity toward native proteins. Deglycosylation is a prerequisite for subsequent proteasome-mediated degradation of some, but not all, misfolded glycoproteins. The polypeptide is Peptide-N(4)-(N-acetyl-beta-glucosaminyl)asparagine amidase (PNG1) (Candida glabrata (strain ATCC 2001 / BCRC 20586 / JCM 3761 / NBRC 0622 / NRRL Y-65 / CBS 138) (Yeast)).